We begin with the raw amino-acid sequence, 294 residues long: Thymidylate synthase 1/2 (294 aa).

DUMP is bound by residues Arg-29 and 154 to 155 (RR). The active-site Nucleophile is the Cys-174. Residues 194–197 (RSGD), Asn-205, and 235–237 (HVY) contribute to the dUMP site. Asp-197 contacts (6R)-5,10-methylene-5,6,7,8-tetrahydrofolate.

The protein belongs to the thymidylate synthase family.

The enzyme catalyses dUMP + (6R)-5,10-methylene-5,6,7,8-tetrahydrofolate = 7,8-dihydrofolate + dTMP. The protein operates within pyrimidine metabolism; dTTP biosynthesis. The polypeptide is Thymidylate synthase 1/2 (TS-1) (Encephalitozoon cuniculi (strain GB-M1) (Microsporidian parasite)).